Reading from the N-terminus, the 512-residue chain is FAD-linked oxidoreductase iacH (512 aa).

The N-terminal stretch at methionine 1 to glycine 22 is a signal peptide. N-linked (GlcNAc...) asparagine glycosylation is found at asparagine 39, asparagine 55, asparagine 69, asparagine 210, asparagine 217, asparagine 278, asparagine 295, and asparagine 367. One can recognise an FAD-binding PCMH-type domain in the interval leucine 77–glycine 248.

This sequence belongs to the oxygen-dependent FAD-linked oxidoreductase family. FAD serves as cofactor.

It functions in the pathway secondary metabolite biosynthesis. Its function is as follows. FAD-linked oxidoreductase; part of the gene cluster that mediates the biosynthesis of iso-A82775C, a enylepoxycyclohexane and biosynthetic precursor of the chloropestolide anticancer natural products. Within the cluster, the prenyltransferase iacE prenylates siccayne to generate pestalodiol E, using dimethylallyl diphosphate (DMAPP) as cosubstrate. The probable oxidoreductase iacF is then involved in the epoxidation of pestalodiol F to pestalodiol F, which is further converted to pestalofone A by the short-chain dehydrogenase/reductase iacG. Iso-A82775C is subsequently generated from pestalofone A by the short-chain dehydrogenase/reductase iacC. Iso-A82775C is further condensed with maldoxin via a Diels-Alder reaction to produce the anticancer natural products chloropestolides A to E. The sequence is that of FAD-linked oxidoreductase iacH from Pestalotiopsis fici (strain W106-1 / CGMCC3.15140).